The following is a 799-amino-acid chain: Serine/threonine-protein kinase AfsK (799 aa).

One can recognise a Protein kinase domain in the interval 16-271 (FEVLGRLGAG…QAQLAPHLFG (256 aa)). ATP contacts are provided by residues 22–30 (LGAGGMGLV) and Lys-44. Ser-71 carries the phosphoserine; by autocatalysis modification. Asp-138 serves as the catalytic Proton acceptor. Phosphothreonine; by autocatalysis is present on Thr-168. Disordered regions lie at residues 295 to 343 (RRNG…PAPP) and 393 to 426 (LAASWSRPRPGVNGADPAVPAPAPAPPEASPAGW). Pro residues-rich tracts occupy residues 325–343 (HAPPLPPPPAHDPVVPAPP) and 411–421 (VPAPAPAPPEA).

Belongs to the protein kinase superfamily. Ser/Thr protein kinase family. Interacts (via the N-terminal kinase domain) with KbpA; the interaction prevents autophosphorylation of AfsK. Post-translationally, autophosphorylated mainly on threonine residues. Some phosphorylation on serine residues. Autophosphorylation on Thr-168 is the major site enhancing kinase activity towards AfsR, and is regulated though interaction with KbpA.

It carries out the reaction L-seryl-[protein] + ATP = O-phospho-L-seryl-[protein] + ADP + H(+). The catalysed reaction is L-threonyl-[protein] + ATP = O-phospho-L-threonyl-[protein] + ADP + H(+). In terms of biological role, involved in the regulation of secondary metabolism by phosphorylating, on both Ser and Thr, the AfsR global regulatory protein involved in the control of secondary metabolism. The sequence is that of Serine/threonine-protein kinase AfsK (afsK) from Streptomyces coelicolor (strain ATCC BAA-471 / A3(2) / M145).